Reading from the N-terminus, the 776-residue chain is Structure-specific endonuclease subunit SLX4 (776 aa).

A compositionally biased stretch (acidic residues) spans 201 to 217; sequence EEQMVSDDNSSTEDDTD. Disordered regions lie at residues 201-223, 263-283, and 507-531; these read EEQM…QNDG, KSLQ…PDQN, and PPLD…KPHS.

It belongs to the SLX4 family. Forms a heterodimer with SLX1. Post-translationally, phosphorylated in response to DNA damage.

It is found in the nucleus. Regulatory subunit of the SLX1-SLX4 structure-specific endonuclease that resolves DNA secondary structures generated during DNA repair and recombination. Has endonuclease activity towards branched DNA substrates, introducing single-strand cuts in duplex DNA close to junctions with ss-DNA. The protein is Structure-specific endonuclease subunit SLX4 of Candida albicans (strain SC5314 / ATCC MYA-2876) (Yeast).